The sequence spans 154 residues: Myoglobin (154 aa).

The Globin domain occupies 2–148 (GLSDQEWQQV…FRNDMASKYK (147 aa)). Histidine 65 contributes to the nitrite binding site. Histidine 65 provides a ligand contact to O2. Histidine 94 is a heme b binding site.

In terms of assembly, monomeric.

It is found in the cytoplasm. The protein localises to the sarcoplasm. The enzyme catalyses Fe(III)-heme b-[protein] + nitric oxide + H2O = Fe(II)-heme b-[protein] + nitrite + 2 H(+). It carries out the reaction H2O2 + AH2 = A + 2 H2O. Its function is as follows. Monomeric heme protein which primary function is to store oxygen and facilitate its diffusion within muscle tissues. Reversibly binds oxygen through a pentacoordinated heme iron and enables its timely and efficient release as needed during periods of heightened demand. Depending on the oxidative conditions of tissues and cells, and in addition to its ability to bind oxygen, it also has a nitrite reductase activity whereby it regulates the production of bioactive nitric oxide. Under stress conditions, like hypoxia and anoxia, it also protects cells against reactive oxygen species thanks to its pseudoperoxidase activity. The chain is Myoglobin (MB) from Struthio camelus (Common ostrich).